A 548-amino-acid chain; its full sequence is MQFLEFAQVCEHLEGTPGRLDMIEQVAAVLPRLDDEELPVFVRFVMGRVFPDWSTKKLGVGPNLLYDAVAYVVGTKRETVREAINTTGDVGLAVEGLLARKEQTSFFIQELDLLDVYRELERMAAAEGQRSQREKLRVAQGLFGNARPLEGRYLARLLLEELRIGMGEGNVRDAVAKAFELDVRLVEHAHQALNDLGEVALLARRDPDALSGVTIEPFRPVKMMLAQAGTIAAQIEDHGEVAVEYKYDGSRFQFHKVGDVCRIYSRRLEDVTESLPDIANLLLEATDHDVILDGEAVAVRDGKPMPFQYVIRRFRRKHEVDSMMEKIELVPMVFDILYLDGETLMDRPLAERRKALDEVLGAHVAPQFPATDAAAAEAIYAEALDLGHEGVMVKVLDSPYTPGVRGRLWVKVKPGVETLDLVVVGAEWGEGRRAGTFGSFLLAVQDQGRLLPVGKVATGITDEVLAELYALFKDRVIARSGKEVTLEPEVVFEVGYSEIQTSPNYESGYALRFPRFVRVREDKSVDETETLDSLAERYGRQRNGQGSL.

Position 244 (glutamate 244) interacts with ATP. The active-site N6-AMP-lysine intermediate is lysine 246. The ATP site is built by arginine 251, arginine 266, glutamate 295, phenylalanine 334, arginine 405, and lysine 411.

Belongs to the ATP-dependent DNA ligase family. Mg(2+) serves as cofactor.

The catalysed reaction is ATP + (deoxyribonucleotide)n-3'-hydroxyl + 5'-phospho-(deoxyribonucleotide)m = (deoxyribonucleotide)n+m + AMP + diphosphate.. DNA ligase that seals nicks in double-stranded DNA during DNA replication, DNA recombination and DNA repair. The protein is DNA ligase of Methanoculleus marisnigri (strain ATCC 35101 / DSM 1498 / JR1).